Consider the following 97-residue polypeptide: Eotaxin (97 aa).

The N-terminal stretch at 1–23 (MQSSTALLFLLLTVTSFTSQVLA) is a signal peptide. Disulfide bonds link C32–C57 and C33–C73. T94 is a glycosylation site (O-linked (GalNAc...) threonine).

Belongs to the intercrine beta (chemokine CC) family. Expressed constitutively in the thymus. Expression inducible in the lung (type I alveolar epithelial cells), intestine, heart, spleen, kidney.

Its subcellular location is the secreted. Its function is as follows. In response to the presence of allergens, this protein directly promotes the accumulation of eosinophils (a prominent feature of allergic inflammatory reactions), but not lymphocytes, macrophages or neutrophils. Binds to CCR3. The sequence is that of Eotaxin (Ccl11) from Mus musculus (Mouse).